The following is a 185-amino-acid chain: Peptidyl-tRNA hydrolase (185 aa).

Tyr14 is a tRNA binding site. His19 serves as the catalytic Proton acceptor. Phe64, Asn66, and Asn112 together coordinate tRNA.

This sequence belongs to the PTH family. In terms of assembly, monomer.

The protein localises to the cytoplasm. The catalysed reaction is an N-acyl-L-alpha-aminoacyl-tRNA + H2O = an N-acyl-L-amino acid + a tRNA + H(+). Hydrolyzes ribosome-free peptidyl-tRNAs (with 1 or more amino acids incorporated), which drop off the ribosome during protein synthesis, or as a result of ribosome stalling. Functionally, catalyzes the release of premature peptidyl moieties from peptidyl-tRNA molecules trapped in stalled 50S ribosomal subunits, and thus maintains levels of free tRNAs and 50S ribosomes. The protein is Peptidyl-tRNA hydrolase of Lacticaseibacillus casei (strain BL23) (Lactobacillus casei).